The sequence spans 256 residues: Uridylate kinase (256 aa).

10–13 (KLSG) serves as a coordination point for ATP. Gly-52 provides a ligand contact to UMP. The ATP site is built by Gly-53 and Arg-57. UMP is bound by residues Asp-72 and 134–141 (NGQPFLTT). Residues Tyr-168 and Asp-171 each contribute to the ATP site.

It belongs to the UMP kinase family. Homohexamer.

Its subcellular location is the cytoplasm. The catalysed reaction is UMP + ATP = UDP + ADP. The protein operates within pyrimidine metabolism; CTP biosynthesis via de novo pathway; UDP from UMP (UMPK route): step 1/1. With respect to regulation, inhibited by UTP. Functionally, catalyzes the reversible phosphorylation of UMP to UDP. In Frankia alni (strain DSM 45986 / CECT 9034 / ACN14a), this protein is Uridylate kinase.